A 277-amino-acid polypeptide reads, in one-letter code: ATP-dependent Clp protease proteolytic subunit, mitochondrial (277 aa).

The transit peptide at 1 to 56 directs the protein to the mitochondrion; that stretch reads MWPGILVGGARVASCRYPALGPRLAAHFPAQRPPQRTLQNGLALQRCLHATATRAL. Ser-153 acts as the Nucleophile in catalysis. His-178 is an active-site residue. Lys-200 carries the post-translational modification N6-succinyllysine. Lys-211 bears the N6-acetyllysine mark. Residues 246–277 are disordered; that stretch reads VHPPQDGEDEPTLVQKEPVEAAPAAEPVPAST. The span at 265 to 277 shows a compositional bias: low complexity; that stretch reads EAAPAAEPVPAST.

It belongs to the peptidase S14 family. Fourteen CLPP subunits assemble into 2 heptameric rings which stack back to back to give a disk-like structure with a central cavity. Component of the ClpXP complex formed by the assembly of two CLPP heptameric rings with two CLPX hexameric rings, giving rise to a symmetrical structure with two central CLPP rings flanked by a CLPX ring at either end of the complex. In terms of tissue distribution, detected in liver (at protein level). Predominantly expressed in skeletal muscle. Intermediate levels in heart, liver and pancreas. Low in brain, placenta, lung and kidney.

The protein resides in the mitochondrion matrix. The enzyme catalyses Hydrolysis of proteins to small peptides in the presence of ATP and magnesium. alpha-casein is the usual test substrate. In the absence of ATP, only oligopeptides shorter than five residues are hydrolyzed (such as succinyl-Leu-Tyr-|-NHMec, and Leu-Tyr-Leu-|-Tyr-Trp, in which cleavage of the -Tyr-|-Leu- and -Tyr-|-Trp bonds also occurs).. Its function is as follows. Protease component of the ClpXP complex that cleaves peptides and various proteins in an ATP-dependent process. Has low peptidase activity in the absence of CLPX. The ClpXP complex can degrade CSN1S1, CSN2 and CSN3, as well as synthetic peptides (in vitro) and may be responsible for a fairly general and central housekeeping function rather than for the degradation of specific substrates. Cleaves PINK1 in the mitochondrion. This is ATP-dependent Clp protease proteolytic subunit, mitochondrial from Homo sapiens (Human).